The sequence spans 545 residues: ATP synthase subunit alpha (545 aa).

ATP is bound at residue 173–180 (GDRQTGKT).

The protein belongs to the ATPase alpha/beta chains family. F-type ATPases have 2 components, CF(1) - the catalytic core - and CF(0) - the membrane proton channel. CF(1) has five subunits: alpha(3), beta(3), gamma(1), delta(1), epsilon(1). CF(0) has three main subunits: a(1), b(2) and c(9-12). The alpha and beta chains form an alternating ring which encloses part of the gamma chain. CF(1) is attached to CF(0) by a central stalk formed by the gamma and epsilon chains, while a peripheral stalk is formed by the delta and b chains.

Its subcellular location is the cell membrane. It carries out the reaction ATP + H2O + 4 H(+)(in) = ADP + phosphate + 5 H(+)(out). In terms of biological role, produces ATP from ADP in the presence of a proton gradient across the membrane. The alpha chain is a regulatory subunit. The sequence is that of ATP synthase subunit alpha from Clavibacter sepedonicus (Clavibacter michiganensis subsp. sepedonicus).